The sequence spans 123 residues: Ribosome-binding factor A (123 aa).

This sequence belongs to the RbfA family. In terms of assembly, monomer. Binds 30S ribosomal subunits, but not 50S ribosomal subunits or 70S ribosomes.

It localises to the cytoplasm. Its function is as follows. One of several proteins that assist in the late maturation steps of the functional core of the 30S ribosomal subunit. Associates with free 30S ribosomal subunits (but not with 30S subunits that are part of 70S ribosomes or polysomes). Required for efficient processing of 16S rRNA. May interact with the 5'-terminal helix region of 16S rRNA. This Ralstonia pickettii (strain 12J) protein is Ribosome-binding factor A.